The primary structure comprises 275 residues: Large ribosomal subunit protein uL2 (275 aa).

Positions 236 to 263 (EGRGKGQHPVTPWGMPTKGYKTRRGRRA) are disordered.

This sequence belongs to the universal ribosomal protein uL2 family. In terms of assembly, part of the 50S ribosomal subunit. Forms a bridge to the 30S subunit in the 70S ribosome.

Its function is as follows. One of the primary rRNA binding proteins. Required for association of the 30S and 50S subunits to form the 70S ribosome, for tRNA binding and peptide bond formation. It has been suggested to have peptidyltransferase activity; this is somewhat controversial. Makes several contacts with the 16S rRNA in the 70S ribosome. The protein is Large ribosomal subunit protein uL2 of Pseudothermotoga lettingae (strain ATCC BAA-301 / DSM 14385 / NBRC 107922 / TMO) (Thermotoga lettingae).